Reading from the N-terminus, the 565-residue chain is NAD-dependent malic enzyme (565 aa).

Y104 (proton donor) is an active-site residue. R157 contacts NAD(+). K175 functions as the Proton acceptor in the catalytic mechanism. A divalent metal cation-binding residues include E246, D247, and D270. NAD(+) contacts are provided by D270 and N418.

It belongs to the malic enzymes family. Homotetramer. Requires Mg(2+) as cofactor. The cofactor is Mn(2+).

The enzyme catalyses (S)-malate + NAD(+) = pyruvate + CO2 + NADH. It carries out the reaction oxaloacetate + H(+) = pyruvate + CO2. The sequence is that of NAD-dependent malic enzyme from Escherichia coli O9:H4 (strain HS).